A 335-amino-acid polypeptide reads, in one-letter code: GTPase Obg (335 aa).

The region spanning 1–159 (MKFVDSAKIS…IELEMELKLM (159 aa)) is the Obg domain. In terms of domain architecture, OBG-type G spans 160–323 (ADVGLVGFPN…LKDELWRQIS (164 aa)). GTP contacts are provided by residues 166–173 (GFPNAGKS), 191–195 (FTTLV), 213–216 (DIPG), 280–283 (TKMD), and 304–306 (SSV). Ser-173 and Thr-193 together coordinate Mg(2+).

This sequence belongs to the TRAFAC class OBG-HflX-like GTPase superfamily. OBG GTPase family. Monomer. The cofactor is Mg(2+).

It localises to the cytoplasm. An essential GTPase which binds GTP, GDP and possibly (p)ppGpp with moderate affinity, with high nucleotide exchange rates and a fairly low GTP hydrolysis rate. Plays a role in control of the cell cycle, stress response, ribosome biogenesis and in those bacteria that undergo differentiation, in morphogenesis control. The sequence is that of GTPase Obg from Chlorobaculum parvum (strain DSM 263 / NCIMB 8327) (Chlorobium vibrioforme subsp. thiosulfatophilum).